We begin with the raw amino-acid sequence, 443 residues long: Trigger factor (443 aa).

Positions 165–250 (GDQVVMDFVG…IKEVKEPVAA (86 aa)) constitute a PPIase FKBP-type domain.

It belongs to the FKBP-type PPIase family. Tig subfamily.

It is found in the cytoplasm. The catalysed reaction is [protein]-peptidylproline (omega=180) = [protein]-peptidylproline (omega=0). In terms of biological role, involved in protein export. Acts as a chaperone by maintaining the newly synthesized protein in an open conformation. Functions as a peptidyl-prolyl cis-trans isomerase. In Ruegeria pomeroyi (strain ATCC 700808 / DSM 15171 / DSS-3) (Silicibacter pomeroyi), this protein is Trigger factor.